We begin with the raw amino-acid sequence, 450 residues long: UDP-N-acetylmuramoylalanine--D-glutamate ligase (450 aa).

Glycine 119–threonine 125 lines the ATP pocket.

The protein belongs to the MurCDEF family.

The protein resides in the cytoplasm. The enzyme catalyses UDP-N-acetyl-alpha-D-muramoyl-L-alanine + D-glutamate + ATP = UDP-N-acetyl-alpha-D-muramoyl-L-alanyl-D-glutamate + ADP + phosphate + H(+). It participates in cell wall biogenesis; peptidoglycan biosynthesis. Cell wall formation. Catalyzes the addition of glutamate to the nucleotide precursor UDP-N-acetylmuramoyl-L-alanine (UMA). The polypeptide is UDP-N-acetylmuramoylalanine--D-glutamate ligase (Bacillus cereus (strain Q1)).